We begin with the raw amino-acid sequence, 343 residues long: Dihydroorotase (343 aa).

Residues His-13 and His-15 each coordinate Zn(2+). Residues 15–17 (HLR) and Asn-41 contribute to the substrate site. Zn(2+) is bound by residues Lys-99, His-136, and His-174. Lys-99 is subject to N6-carboxylysine. Residue His-136 participates in substrate binding. Residue Leu-219 coordinates substrate. Zn(2+) is bound at residue Asp-247. The active site involves Asp-247. Substrate contacts are provided by His-251 and Ala-263.

Belongs to the metallo-dependent hydrolases superfamily. DHOase family. Class II DHOase subfamily. In terms of assembly, homodimer. Zn(2+) is required as a cofactor.

The enzyme catalyses (S)-dihydroorotate + H2O = N-carbamoyl-L-aspartate + H(+). It functions in the pathway pyrimidine metabolism; UMP biosynthesis via de novo pathway; (S)-dihydroorotate from bicarbonate: step 3/3. Functionally, catalyzes the reversible cyclization of carbamoyl aspartate to dihydroorotate. In Shewanella putrefaciens (strain CN-32 / ATCC BAA-453), this protein is Dihydroorotase.